The chain runs to 280 residues: Putative aquaporin-10 (280 aa).

The Cytoplasmic segment spans residues 1 to 8 (MEAVSSEY). Residues 9 to 29 (YFPLYSALGYFALVFGIGEIA) traverse the membrane as a helical segment. Topologically, residues 30–64 (RIITAKYVSPRGNSQLFLYELIGTIQMCTCVYENG) are extracellular. Residues 65-85 (IIFKNYGFPAIFICVALLLTA) form a helical membrane-spanning segment. The Cytoplasmic portion of the chain corresponds to 86–114 (GNIFNRGAMTNCAPIFEQFVFGNLGSSKF). A helical membrane pass occupies residues 115–135 (LTILSAQLIGATFASKFAYLI). Residues 136 to 164 (WNITAPYSTAHLENASNLECILHYKQTAG) are Extracellular-facing. A helical transmembrane segment spans residues 165–185 (IVIGFEIVGAFVVRIVVAQLL). The Cytoplasmic portion of the chain corresponds to 186 to 193 (ARPALIKL). Residues 194 to 214 (IPFAISAYLSLALYVVGVPGL) traverse the membrane as a helical segment. Topologically, residues 215–233 (NPIVATARLYGCRGIDNSS) are extracellular. A helical transmembrane segment spans residues 234-254 (FFILYWFCPVLGWLTGAYVVG). The Cytoplasmic segment spans residues 255 to 280 (QKSPSKKSAKDVKAEKKAKAAAKKSD). The segment at 256-280 (KSPSKKSAKDVKAEKKAKAAAKKSD) is disordered. The span at 262–280 (SAKDVKAEKKAKAAAKKSD) shows a compositional bias: basic and acidic residues.

Belongs to the MIP/aquaporin (TC 1.A.8) family.

Its subcellular location is the membrane. The sequence is that of Putative aquaporin-10 (aqp-10) from Caenorhabditis elegans.